Here is an 84-residue protein sequence, read N- to C-terminus: MAHKKGVGSSRNGRDSDGQRLGCKKFGGELVKAGNIIYRQRGTQIHPGNNVGCGKDYTLFALIEGVVKFERLGRDRKKVSVYPS.

Residues Met-1–Leu-21 form a disordered region.

The protein belongs to the bacterial ribosomal protein bL27 family.

The sequence is that of Large ribosomal subunit protein bL27 from Trichlorobacter lovleyi (strain ATCC BAA-1151 / DSM 17278 / SZ) (Geobacter lovleyi).